A 60-amino-acid polypeptide reads, in one-letter code: Homeobox protein CHOX-CAD2 (60 aa).

Positions 1–60 (KEKYRVVYTDHQRLELEKEFHCNRYITIRRKSELAVNLGLSERQVKSWFQNRRAKERKII) form a DNA-binding region, homeobox.

Belongs to the Caudal homeobox family.

It is found in the nucleus. This chain is Homeobox protein CHOX-CAD2 (CHOX-CAD2), found in Gallus gallus (Chicken).